A 243-amino-acid chain; its full sequence is 1-(5-phosphoribosyl)-5-[(5-phosphoribosylamino)methylideneamino] imidazole-4-carboxamide isomerase (243 aa).

The active-site Proton acceptor is the Asp8. Asp129 functions as the Proton donor in the catalytic mechanism.

It belongs to the HisA/HisF family.

The protein localises to the cytoplasm. The catalysed reaction is 1-(5-phospho-beta-D-ribosyl)-5-[(5-phospho-beta-D-ribosylamino)methylideneamino]imidazole-4-carboxamide = 5-[(5-phospho-1-deoxy-D-ribulos-1-ylimino)methylamino]-1-(5-phospho-beta-D-ribosyl)imidazole-4-carboxamide. It functions in the pathway amino-acid biosynthesis; L-histidine biosynthesis; L-histidine from 5-phospho-alpha-D-ribose 1-diphosphate: step 4/9. In Brucella abortus (strain 2308), this protein is 1-(5-phosphoribosyl)-5-[(5-phosphoribosylamino)methylideneamino] imidazole-4-carboxamide isomerase.